Reading from the N-terminus, the 443-residue chain is Differentially expressed in FDCP 8 homolog A (443 aa).

Residues methionine 1 to glutamate 49 are disordered. Phorbol-ester/DAG-type zinc fingers lie at residues glutamate 134–cysteine 185 and isoleucine 364–cysteine 424.

This sequence belongs to the DEF8 family.

In terms of biological role, positively regulates lysosome peripheral distribution and ruffled border formation in osteoclasts. Involved in bone resorption. This Xenopus laevis (African clawed frog) protein is Differentially expressed in FDCP 8 homolog A (def8-a).